We begin with the raw amino-acid sequence, 271 residues long: Small ribosomal subunit protein uS9m (271 aa).

Residues 1 to 11 (MFRSLAKLRCF) constitute a mitochondrion transit peptide. Residues 251-271 (KVERKKTGQPKARKKYTWVKR) form a disordered region. Basic residues predominate over residues 252–271 (VERKKTGQPKARKKYTWVKR).

It belongs to the universal ribosomal protein uS9 family. As to quaternary structure, component of the mitochondrial small ribosomal subunit (mt-SSU). Mature yeast 74S mitochondrial ribosomes consist of a small (37S) and a large (54S) subunit. The 37S small subunit contains a 15S ribosomal RNA (15S mt-rRNA) and at least 32 different proteins. The 54S large subunit contains a 21S rRNA (21S mt-rRNA) and at least 45 different proteins.

Its subcellular location is the mitochondrion. Functionally, component of the mitochondrial ribosome (mitoribosome), a dedicated translation machinery responsible for the synthesis of mitochondrial genome-encoded proteins, including at least some of the essential transmembrane subunits of the mitochondrial respiratory chain. The mitoribosomes are attached to the mitochondrial inner membrane and translation products are cotranslationally integrated into the membrane. This chain is Small ribosomal subunit protein uS9m (mrps9), found in Schizosaccharomyces pombe (strain 972 / ATCC 24843) (Fission yeast).